The following is a 336-amino-acid chain: Ketol-acid reductoisomerase (NADP(+)) (336 aa).

One can recognise a KARI N-terminal Rossmann domain in the interval 2–181 (AKVYYEKDVM…GATRAGVLET (180 aa)). NADP(+)-binding positions include 25–28 (YGSQ), arginine 48, serine 52, and 82–85 (DELQ). Histidine 107 is a catalytic residue. Glycine 133 serves as a coordination point for NADP(+). In terms of domain architecture, KARI C-terminal knotted spans 182-327 (TFKEETETDL…RQLREMMPFV (146 aa)). Mg(2+)-binding residues include aspartate 190, glutamate 194, glutamate 226, and glutamate 230. Residue serine 251 coordinates substrate.

The protein belongs to the ketol-acid reductoisomerase family. Requires Mg(2+) as cofactor.

The catalysed reaction is (2R)-2,3-dihydroxy-3-methylbutanoate + NADP(+) = (2S)-2-acetolactate + NADPH + H(+). It catalyses the reaction (2R,3R)-2,3-dihydroxy-3-methylpentanoate + NADP(+) = (S)-2-ethyl-2-hydroxy-3-oxobutanoate + NADPH + H(+). The protein operates within amino-acid biosynthesis; L-isoleucine biosynthesis; L-isoleucine from 2-oxobutanoate: step 2/4. It participates in amino-acid biosynthesis; L-valine biosynthesis; L-valine from pyruvate: step 2/4. Its function is as follows. Involved in the biosynthesis of branched-chain amino acids (BCAA). Catalyzes an alkyl-migration followed by a ketol-acid reduction of (S)-2-acetolactate (S2AL) to yield (R)-2,3-dihydroxy-isovalerate. In the isomerase reaction, S2AL is rearranged via a Mg-dependent methyl migration to produce 3-hydroxy-3-methyl-2-ketobutyrate (HMKB). In the reductase reaction, this 2-ketoacid undergoes a metal-dependent reduction by NADPH to yield (R)-2,3-dihydroxy-isovalerate. The chain is Ketol-acid reductoisomerase (NADP(+)) from Bacillus cytotoxicus (strain DSM 22905 / CIP 110041 / 391-98 / NVH 391-98).